We begin with the raw amino-acid sequence, 234 residues long: Cell fusion protein dni1 (234 aa).

The signal sequence occupies residues 1–32; the sequence is MLFLHSVVQGTGTLCTLAAWILLALVMTGCQS. At 33-96 the chain is on the extracellular side; sequence STTSKFQLFS…RSKFLINEVH (64 aa). Residues 97–117 traverse the membrane as a helical segment; sequence PWMIVFSFCVCGVSFLMGVVS. At 118–132 the chain is on the cytoplasmic side; that stretch reads SLPLIGRLEFLRNIR. Residues 133-153 form a helical membrane-spanning segment; sequence ISLSFFSFFSILVTALFAHVA. Residues 154–178 lie on the Extracellular side of the membrane; that stretch reads VSSFVMAVGNGTQNRVTASLGKKAM. The helical transmembrane segment at 179–199 threads the bilayer; it reads IFLWCSMGLVTLTGITDSIIL. Over 200–234 the chain is Cytoplasmic; sequence LVTSRTKKIRKTILEKSKVLTPSSSFSSKSSTTKY.

The protein belongs to the SUR7 family.

The protein resides in the cell membrane. The protein localises to the cell tip. Functionally, cell membrane protein which plays a relevant role in coordinating membrane organization and cell wall remodeling during mating. In Schizosaccharomyces pombe (strain 972 / ATCC 24843) (Fission yeast), this protein is Cell fusion protein dni1 (dni1).